We begin with the raw amino-acid sequence, 364 residues long: Valine dehydrogenase (364 aa).

K91 is a catalytic residue. An NAD(+)-binding site is contributed by 191 to 197 (GVGKVGH).

It belongs to the Glu/Leu/Phe/Val dehydrogenases family. As to quaternary structure, homodimer.

Its subcellular location is the cytoplasm. The enzyme catalyses L-valine + NAD(+) + H2O = 3-methyl-2-oxobutanoate + NH4(+) + NADH + H(+). It functions in the pathway amino-acid degradation; L-valine degradation. With respect to regulation, repressed in minimal medium by the presence of glucose and NH4(+), glycerol and NH4(+), or glycerol and asparagine. Functionally, oxidative deamination of branched-chain amino acids. Oxidizes L-valine and L-alpha-aminobutyric acid efficiently, and L-isoleucine and L-leucine less efficiently. Does not act on D-valine. The catabolism of L-valine is the major source of fatty acid precursors for macrolide biosynthesis and a vital source of antibiotic precursors. Uses NAD; no activity was found with NADP. This chain is Valine dehydrogenase (vdh), found in Streptomyces coelicolor (strain ATCC BAA-471 / A3(2) / M145).